The chain runs to 70 residues: U2-agatoxin-Ao1a (70 aa).

An N-terminal signal peptide occupies residues 1–20 (MRAIISLFLISAMVFSMIQA). Positions 21 to 34 (VPEEEGLQLSEDER) are excised as a propeptide. 3 cysteine pairs are disulfide-bonded: C37–C53, C44–C58, and C52–C68. Leucine amide is present on L69.

This sequence belongs to the neurotoxin 01 (U2-agtx) family. In terms of tissue distribution, expressed by the venom gland.

It is found in the secreted. Its function is as follows. Insect active toxin causing rapid but reversible paralysis in crickets. No activity shown in mammals. Suppresses the excitatory postsynaptic potentials evoked in lobster neuromuscular synaptic preparations, possibly by blocking the presynaptic calcium channel. Induces instantaneous reversible paralysis when injected into crickets. Does not show effect on mammalian Cav2.1/CACNA1A, Cav2.2/CACNA1B and Cav2.3/CACNA1E. The protein is U2-agatoxin-Ao1a of Agelena orientalis (Funnel-web spider).